We begin with the raw amino-acid sequence, 415 residues long: Multifunctional CCA protein (415 aa).

Glycine 8 and arginine 11 together coordinate ATP. 2 residues coordinate CTP: glycine 8 and arginine 11. The Mg(2+) site is built by glutamate 21 and aspartate 23. The ATP site is built by arginine 91, arginine 137, and arginine 140. The CTP site is built by arginine 91, arginine 137, and arginine 140. Residues 226–327 (TGIHTLMTVS…IKLFSAIDVW (102 aa)) enclose the HD domain.

Belongs to the tRNA nucleotidyltransferase/poly(A) polymerase family. Bacterial CCA-adding enzyme type 1 subfamily. As to quaternary structure, monomer. Can also form homodimers and oligomers. Requires Mg(2+) as cofactor. The cofactor is Ni(2+).

The catalysed reaction is a tRNA precursor + 2 CTP + ATP = a tRNA with a 3' CCA end + 3 diphosphate. It catalyses the reaction a tRNA with a 3' CCA end + 2 CTP + ATP = a tRNA with a 3' CCACCA end + 3 diphosphate. Catalyzes the addition and repair of the essential 3'-terminal CCA sequence in tRNAs without using a nucleic acid template. Adds these three nucleotides in the order of C, C, and A to the tRNA nucleotide-73, using CTP and ATP as substrates and producing inorganic pyrophosphate. tRNA 3'-terminal CCA addition is required both for tRNA processing and repair. Also involved in tRNA surveillance by mediating tandem CCA addition to generate a CCACCA at the 3' terminus of unstable tRNAs. While stable tRNAs receive only 3'-terminal CCA, unstable tRNAs are marked with CCACCA and rapidly degraded. In Sodalis glossinidius (strain morsitans), this protein is Multifunctional CCA protein.